Here is a 181-residue protein sequence, read N- to C-terminus: TATA-box-binding protein (181 aa).

A run of 2 repeats spans residues 7 to 83 (IVNV…MEYL) and 98 to 173 (VQNM…KNTV).

The protein belongs to the TBP family.

In terms of biological role, general factor that plays a role in the activation of archaeal genes transcribed by RNA polymerase. Binds specifically to the TATA box promoter element which lies close to the position of transcription initiation. The chain is TATA-box-binding protein from Methanococcus aeolicus (strain ATCC BAA-1280 / DSM 17508 / OCM 812 / Nankai-3).